We begin with the raw amino-acid sequence, 397 residues long: Elongation factor Tu (397 aa).

The region spanning K10–Q207 is the tr-type G domain. The interval G19–T26 is G1. GTP is bound at residue G19 to T26. Residue T26 participates in Mg(2+) binding. A G2 region spans residues G60–A64. Positions D81–G84 are G3. Residues D81–H85 and N136–D139 contribute to the GTP site. Residues N136–D139 form a G4 region. The interval S174–L176 is G5.

This sequence belongs to the TRAFAC class translation factor GTPase superfamily. Classic translation factor GTPase family. EF-Tu/EF-1A subfamily. Monomer.

Its subcellular location is the cytoplasm. The enzyme catalyses GTP + H2O = GDP + phosphate + H(+). In terms of biological role, GTP hydrolase that promotes the GTP-dependent binding of aminoacyl-tRNA to the A-site of ribosomes during protein biosynthesis. In Nitratidesulfovibrio vulgaris (strain DSM 19637 / Miyazaki F) (Desulfovibrio vulgaris), this protein is Elongation factor Tu.